A 495-amino-acid chain; its full sequence is Glutamyl-tRNA(Gln) amidotransferase subunit A (495 aa).

Residues Lys78 and Ser158 each act as charge relay system in the active site. Ser182 acts as the Acyl-ester intermediate in catalysis.

Belongs to the amidase family. GatA subfamily. As to quaternary structure, heterotrimer of A, B and C subunits.

It catalyses the reaction L-glutamyl-tRNA(Gln) + L-glutamine + ATP + H2O = L-glutaminyl-tRNA(Gln) + L-glutamate + ADP + phosphate + H(+). Functionally, allows the formation of correctly charged Gln-tRNA(Gln) through the transamidation of misacylated Glu-tRNA(Gln) in organisms which lack glutaminyl-tRNA synthetase. The reaction takes place in the presence of glutamine and ATP through an activated gamma-phospho-Glu-tRNA(Gln). The polypeptide is Glutamyl-tRNA(Gln) amidotransferase subunit A (Roseobacter denitrificans (strain ATCC 33942 / OCh 114) (Erythrobacter sp. (strain OCh 114))).